We begin with the raw amino-acid sequence, 327 residues long: Zinc transport protein ZntB (327 aa).

At 1-271 (MESFAGKELQ…AMNRRTYTMS (271 aa)) the chain is on the cytoplasmic side. Residues 272–292 (LLAMVFLPTTFLTGLFGVNLG) traverse the membrane as a helical segment. Over 293–300 (GIPGGDAP) the chain is Periplasmic. A helical transmembrane segment spans residues 301–321 (FGFFTFCLMLVILVGGVAWWL). Residues 322–327 (KRSKWL) are Cytoplasmic-facing.

The protein belongs to the CorA metal ion transporter (MIT) (TC 1.A.35) family.

It localises to the cell inner membrane. The catalysed reaction is Zn(2+)(out) + H(+)(out) = Zn(2+)(in) + H(+)(in). Functionally, zinc transporter. Acts as a Zn(2+):proton symporter, which likely mediates zinc ion uptake. This chain is Zinc transport protein ZntB, found in Pectobacterium atrosepticum (strain SCRI 1043 / ATCC BAA-672) (Erwinia carotovora subsp. atroseptica).